The following is a 206-amino-acid chain: Protein GrpE (206 aa).

The segment covering 1–10 has biased composition (basic and acidic residues); it reads MTDPDLHQND. The segment at 1–38 is disordered; sequence MTDPDLHQNDPENPAQASEPVVSKPYIMPDDPETGSAE.

This sequence belongs to the GrpE family. As to quaternary structure, homodimer.

Its subcellular location is the cytoplasm. Its function is as follows. Participates actively in the response to hyperosmotic and heat shock by preventing the aggregation of stress-denatured proteins, in association with DnaK and GrpE. It is the nucleotide exchange factor for DnaK and may function as a thermosensor. Unfolded proteins bind initially to DnaJ; upon interaction with the DnaJ-bound protein, DnaK hydrolyzes its bound ATP, resulting in the formation of a stable complex. GrpE releases ADP from DnaK; ATP binding to DnaK triggers the release of the substrate protein, thus completing the reaction cycle. Several rounds of ATP-dependent interactions between DnaJ, DnaK and GrpE are required for fully efficient folding. This is Protein GrpE from Bradyrhizobium sp. (strain ORS 278).